Here is a 93-residue protein sequence, read N- to C-terminus: MNGIKYAVFTDKSIRLLGKNQYTSNVESGSTRTEIKHWVELFFGVKVKAMNSHRLPAKGRKVRLIMGHTMHYRRMIITLQPGYSIPPLRKKRT.

The protein belongs to the universal ribosomal protein uL23 family. As to quaternary structure, part of the 50S ribosomal subunit.

It is found in the plastid. Its subcellular location is the chloroplast. Functionally, binds to 23S rRNA. The protein is Large ribosomal subunit protein uL23cz/uL23cy (rpl23-A) of Lotus japonicus (Lotus corniculatus var. japonicus).